The sequence spans 654 residues: MNESALNPNYLFHPFVKRFPGDPEHVRNISDIQQLEKYPISERFPCQTVTDALFIAAKKYQHARAMSYLPNGRADDVLQSWSYLEFLEQCIGAANLFHSLGIESDHSVAFLLPNMPEMVFGLWGAQAVAISTPINPFLAVNHICGIVTETKTTILVTLSPDTNPSLFEKALAVKHNTTHTMTLVTIGTPCEDAIDWHTELKKQPFNRYLFNRQLTGMETSAYFHTGGTTGTPKIARHTHRGAMINACQMLIVGPTETELDTKSKVSLCALPLFHVNAIVVSSLTSLLNGSELLLAGQQGFRNKALMSDFWRIVERFKVNFFAGVPTVYAALLEQPVEQHNIDSLFYCGCGSSPMPQVLIKEFTQRTGADICEGYGMTETTACASTHYYYGDRKVGSVGMRVPYQHIRAVHLDDNGQIIKECDCDEVGVLLIQGPNVIPEYKQAFANEQAWPEPGWLNTGDLGKFDADGYLWLTGRQKDLIIRGGHNIDPLIIENTLVSHSDVVMAAAVGKPDAYAGELPVAYVTLTSGATLSADELKQYCKDYISEPAASPVEIYITAELPMTPIGKIFKLPLKHDVIVRFVRELIQALDDTLDFSIDIIDDVSTGNIVSINFAATREKMEAVASQLQQELDKLHFQWKCTFTPVLAEQTVLES.

This sequence belongs to the ATP-dependent AMP-binding enzyme family.

The enzyme catalyses ATP + a marinolic acid + CoA = AMP + diphosphate + a marinoloyl-CoA.. It catalyses the reaction ATP + a pseudomonic acid + CoA = AMP + diphosphate + a pseudomonoyl-CoA.. The catalysed reaction is marinolate C + ATP + CoA = marinoloyl-CoA C + AMP + diphosphate. It carries out the reaction pseudomonate C + ATP + CoA = pseudomonoyl-CoA C + AMP + diphosphate. It participates in antibiotic biosynthesis. In terms of biological role, acyl-CoA ligase that catalyzes the CoA acylation of pseudomonate C, leading to the formation of pseudomonoyl-CoA C (PAC-CoA). Also shows high activity with pseudomonoyl-CoA A as substrate. In addition, can activate acetic, octanoic, 2,4-dodecadienoic and 2,4-decadienoic acids, although with much lower activity. In vivo, is probably involved in the biosynthesis of thiomarinol, a naturally occurring double-headed antibiotic. This chain is Marinolic acid--CoA ligase, found in Pseudoalteromonas sp. (strain SANK 73390).